The following is a 422-amino-acid chain: Phospho-N-acetylmuramoyl-pentapeptide-transferase (422 aa).

The next 9 membrane-spanning stretches (helical) occupy residues 28-48 (LMAI…FINL), 71-91 (VGVP…PCLL), 95-115 (LHNI…TLGF), 136-156 (IIGQ…SPSV), 208-228 (AQAV…TAVS), 239-259 (GMAA…AYVS), 279-299 (LVIF…YNAF), 313-333 (IGGI…IPIL), and 399-419 (KITV…IITL).

Belongs to the glycosyltransferase 4 family. MraY subfamily. The cofactor is Mg(2+).

It localises to the cell inner membrane. The enzyme catalyses UDP-N-acetyl-alpha-D-muramoyl-L-alanyl-gamma-D-glutamyl-meso-2,6-diaminopimeloyl-D-alanyl-D-alanine + di-trans,octa-cis-undecaprenyl phosphate = di-trans,octa-cis-undecaprenyl diphospho-N-acetyl-alpha-D-muramoyl-L-alanyl-D-glutamyl-meso-2,6-diaminopimeloyl-D-alanyl-D-alanine + UMP. It participates in cell wall biogenesis; peptidoglycan biosynthesis. Its function is as follows. Catalyzes the initial step of the lipid cycle reactions in the biosynthesis of the cell wall peptidoglycan: transfers peptidoglycan precursor phospho-MurNAc-pentapeptide from UDP-MurNAc-pentapeptide onto the lipid carrier undecaprenyl phosphate, yielding undecaprenyl-pyrophosphoryl-MurNAc-pentapeptide, known as lipid I. The protein is Phospho-N-acetylmuramoyl-pentapeptide-transferase of Phocaeicola vulgatus (strain ATCC 8482 / DSM 1447 / JCM 5826 / CCUG 4940 / NBRC 14291 / NCTC 11154) (Bacteroides vulgatus).